The sequence spans 203 residues: Superoxide dismutase [Mn] (203 aa).

Mn(2+) contacts are provided by His-27, His-81, Asp-167, and His-171.

It belongs to the iron/manganese superoxide dismutase family. Homodimer. Mn(2+) is required as a cofactor.

The enzyme catalyses 2 superoxide + 2 H(+) = H2O2 + O2. In terms of biological role, destroys superoxide anion radicals which are normally produced within the cells and which are toxic to biological systems. This chain is Superoxide dismutase [Mn] (sodA), found in Buchnera aphidicola subsp. Acyrthosiphon pisum (strain APS) (Acyrthosiphon pisum symbiotic bacterium).